The following is a 504-amino-acid chain: 26S proteasome non-ATPase regulatory subunit 3 (504 aa).

The region spanning 254-434 (ARYFYYQGRI…GYLQSRENID (181 aa)) is the PCI domain. Positions 485–504 (KEEMERQAEESSDNEGDSDF) are disordered. Over residues 494-504 (ESSDNEGDSDF) the composition is skewed to acidic residues.

It belongs to the proteasome subunit S3 family. As to quaternary structure, the 26S proteasome is composed of a core protease, known as the 20S proteasome, capped at one or both ends by the 19S regulatory complex (RC). The RC is composed of at least 18 different subunits in two subcomplexes, the base and the lid, which form the portions proximal and distal to the 20S proteolytic core, respectively.

Functionally, acts as a regulatory subunit of the 26 proteasome which is involved in the ATP-dependent degradation of ubiquitinated proteins. The polypeptide is 26S proteasome non-ATPase regulatory subunit 3 (psmD3) (Dictyostelium discoideum (Social amoeba)).